The sequence spans 196 residues: Lipoprotein signal peptidase (196 aa).

The tract at residues 1–24 (MAEAERIIGMPENPDVDGTDEGGS) is disordered. A run of 3 helical transmembrane segments spans residues 40–60 (ILALLSVAVVAYLLDLGSKML), 92–112 (IGEAFTVIFTIIATGVIVVIF), and 118–138 (LYSLPWAIALGLLLGGALGNL). Residues D155 and D169 contribute to the active site. A helical transmembrane segment spans residues 164 to 184 (VFNLADSAIVCGGILIVILSF).

It belongs to the peptidase A8 family.

The protein resides in the cell membrane. It carries out the reaction Release of signal peptides from bacterial membrane prolipoproteins. Hydrolyzes -Xaa-Yaa-Zaa-|-(S,diacylglyceryl)Cys-, in which Xaa is hydrophobic (preferably Leu), and Yaa (Ala or Ser) and Zaa (Gly or Ala) have small, neutral side chains.. Its pathway is protein modification; lipoprotein biosynthesis (signal peptide cleavage). Its function is as follows. This protein specifically catalyzes the removal of signal peptides from prolipoproteins. This chain is Lipoprotein signal peptidase, found in Streptomyces griseus subsp. griseus (strain JCM 4626 / CBS 651.72 / NBRC 13350 / KCC S-0626 / ISP 5235).